Here is a 563-residue protein sequence, read N- to C-terminus: Arginine--tRNA ligase (563 aa).

A 'HIGH' region motif is present at residues 120-130 (PNIAKPFHVGH).

Belongs to the class-I aminoacyl-tRNA synthetase family. In terms of assembly, monomer.

The protein localises to the cytoplasm. The enzyme catalyses tRNA(Arg) + L-arginine + ATP = L-arginyl-tRNA(Arg) + AMP + diphosphate. The chain is Arginine--tRNA ligase from Clostridium acetobutylicum (strain ATCC 824 / DSM 792 / JCM 1419 / IAM 19013 / LMG 5710 / NBRC 13948 / NRRL B-527 / VKM B-1787 / 2291 / W).